Reading from the N-terminus, the 91-residue chain is Sec-independent protein translocase protein TatAt (91 aa).

The chain crosses the membrane as a helical span at residues 9–29 (FPGLPGGPELLVVLLIVVLLF). Positions 48–91 (FQRGREEIEDELQDMTGDDDEDDATSESSADSVSTDSVSTESSN) are disordered. Residues 54–72 (EIEDELQDMTGDDDEDDAT) show a composition bias toward acidic residues. The segment covering 73–91 (SESSADSVSTDSVSTESSN) has biased composition (low complexity).

This sequence belongs to the TatA/E family. In terms of assembly, forms a complex with TatC. Cytoplasmic and membrane-bound TatA form high-molecular-weight complexes.

It is found in the cell membrane. Its subcellular location is the cytoplasm. Its function is as follows. Part of the twin-arginine translocation (Tat) system that transports large folded proteins containing a characteristic twin-arginine motif in their signal peptide across membranes. TatA could form the protein-conducting channel of the Tat system. The polypeptide is Sec-independent protein translocase protein TatAt (Haloferax volcanii (strain ATCC 29605 / DSM 3757 / JCM 8879 / NBRC 14742 / NCIMB 2012 / VKM B-1768 / DS2) (Halobacterium volcanii)).